The chain runs to 190 residues: Xanthine phosphoribosyltransferase 2 (190 aa).

Leu20 and Asn27 together coordinate xanthine. 129–133 provides a ligand contact to 5-phospho-alpha-D-ribose 1-diphosphate; sequence ANGCA. Lys157 is a xanthine binding site.

Belongs to the purine/pyrimidine phosphoribosyltransferase family. Xpt subfamily. Homodimer.

Its subcellular location is the cytoplasm. It carries out the reaction XMP + diphosphate = xanthine + 5-phospho-alpha-D-ribose 1-diphosphate. Its pathway is purine metabolism; XMP biosynthesis via salvage pathway; XMP from xanthine: step 1/1. Its function is as follows. Converts the preformed base xanthine, a product of nucleic acid breakdown, to xanthosine 5'-monophosphate (XMP), so it can be reused for RNA or DNA synthesis. The chain is Xanthine phosphoribosyltransferase 2 from Clostridium botulinum (strain Langeland / NCTC 10281 / Type F).